The chain runs to 286 residues: Phosphonates import ATP-binding protein PhnC (286 aa).

Residues 3-246 enclose the ABC transporter domain; sequence FHLKQVTRRF…AVTEIYGTDS (244 aa). 35-42 is an ATP binding site; sequence GRSGAGKS.

Belongs to the ABC transporter superfamily. Phosphonates importer (TC 3.A.1.9.1) family. As to quaternary structure, the complex is composed of two ATP-binding proteins (PhnC), two transmembrane proteins (PhnE) and a solute-binding protein (PhnD).

Its subcellular location is the cell inner membrane. It carries out the reaction phosphonate(out) + ATP + H2O = phosphonate(in) + ADP + phosphate + H(+). Functionally, part of the ABC transporter complex PhnCDE involved in phosphonates import. Responsible for energy coupling to the transport system. This is Phosphonates import ATP-binding protein PhnC from Agrobacterium fabrum (strain C58 / ATCC 33970) (Agrobacterium tumefaciens (strain C58)).